Reading from the N-terminus, the 320-residue chain is o-succinylbenzoate synthase (320 aa).

The Proton donor role is filled by K133. Mg(2+)-binding residues include D161, E190, and D213. The Proton acceptor role is filled by K235.

Belongs to the mandelate racemase/muconate lactonizing enzyme family. MenC type 1 subfamily. A divalent metal cation serves as cofactor.

It carries out the reaction (1R,6R)-6-hydroxy-2-succinyl-cyclohexa-2,4-diene-1-carboxylate = 2-succinylbenzoate + H2O. It participates in quinol/quinone metabolism; 1,4-dihydroxy-2-naphthoate biosynthesis; 1,4-dihydroxy-2-naphthoate from chorismate: step 4/7. Its pathway is quinol/quinone metabolism; menaquinone biosynthesis. Functionally, converts 2-succinyl-6-hydroxy-2,4-cyclohexadiene-1-carboxylate (SHCHC) to 2-succinylbenzoate (OSB). In Escherichia coli O45:K1 (strain S88 / ExPEC), this protein is o-succinylbenzoate synthase.